The chain runs to 1407 residues: DNA-directed RNA polymerase subunit beta' (1407 aa).

Cys70, Cys72, Cys85, and Cys88 together coordinate Zn(2+). 3 residues coordinate Mg(2+): Asp460, Asp462, and Asp464. Residues Cys814, Cys888, Cys895, and Cys898 each contribute to the Zn(2+) site.

The protein belongs to the RNA polymerase beta' chain family. As to quaternary structure, the RNAP catalytic core consists of 2 alpha, 1 beta, 1 beta' and 1 omega subunit. When a sigma factor is associated with the core the holoenzyme is formed, which can initiate transcription. Mg(2+) is required as a cofactor. The cofactor is Zn(2+).

The enzyme catalyses RNA(n) + a ribonucleoside 5'-triphosphate = RNA(n+1) + diphosphate. DNA-dependent RNA polymerase catalyzes the transcription of DNA into RNA using the four ribonucleoside triphosphates as substrates. This Cronobacter sakazakii (strain ATCC BAA-894) (Enterobacter sakazakii) protein is DNA-directed RNA polymerase subunit beta'.